We begin with the raw amino-acid sequence, 158 residues long: Single-stranded DNA-binding protein 2 (158 aa).

Residues 1–107 (MNETIVCVVG…IDALAVGHDL (107 aa)) enclose the SSB domain. The tract at residues 109–158 (RGTSAFRRPSAKDGEAGVSPAARPEPNWETEPGSQPSVEHQPQPEPAGVT) is disordered.

As to quaternary structure, homotetramer.

The sequence is that of Single-stranded DNA-binding protein 2 (ssb2) from Streptomyces avermitilis (strain ATCC 31267 / DSM 46492 / JCM 5070 / NBRC 14893 / NCIMB 12804 / NRRL 8165 / MA-4680).